Consider the following 412-residue polypeptide: Arginine biosynthesis bifunctional protein ArgJ (412 aa).

6 residues coordinate substrate: T162, K188, T199, E285, N407, and T412. T199 functions as the Nucleophile in the catalytic mechanism.

Belongs to the ArgJ family. In terms of assembly, heterotetramer of two alpha and two beta chains.

The protein resides in the cytoplasm. It carries out the reaction N(2)-acetyl-L-ornithine + L-glutamate = N-acetyl-L-glutamate + L-ornithine. The enzyme catalyses L-glutamate + acetyl-CoA = N-acetyl-L-glutamate + CoA + H(+). Its pathway is amino-acid biosynthesis; L-arginine biosynthesis; L-ornithine and N-acetyl-L-glutamate from L-glutamate and N(2)-acetyl-L-ornithine (cyclic): step 1/1. It functions in the pathway amino-acid biosynthesis; L-arginine biosynthesis; N(2)-acetyl-L-ornithine from L-glutamate: step 1/4. Its function is as follows. Catalyzes two activities which are involved in the cyclic version of arginine biosynthesis: the synthesis of N-acetylglutamate from glutamate and acetyl-CoA as the acetyl donor, and of ornithine by transacetylation between N(2)-acetylornithine and glutamate. This Staphylococcus saprophyticus subsp. saprophyticus (strain ATCC 15305 / DSM 20229 / NCIMB 8711 / NCTC 7292 / S-41) protein is Arginine biosynthesis bifunctional protein ArgJ.